The following is a 180-amino-acid chain: MKQPARTSQVKKPAARVKRKTREEINQEARDRKREKKHSGHASGSRANPATVSQKGDKSQSVKDPRIGSKKAIALGTDAPVRQPANPVKAAKPAVEKKPRLTPEEELAKLENDERLDALLDRLENGEALSAEDQAWLDQSLDRIDVLMEQLGIALDDDAEDEKAEEDMYRLLKGSHRTPE.

The span at 1 to 10 (MKQPARTSQV) shows a compositional bias: polar residues. Disordered regions lie at residues 1–102 (MKQP…PRLT) and 158–180 (DAEDEKAEEDMYRLLKGSHRTPE). Residues 21 to 32 (TREEINQEARDR) show a composition bias toward basic and acidic residues. Residues 45 to 54 (SRANPATVSQ) are compositionally biased toward polar residues. The segment covering 55 to 67 (KGDKSQSVKDPRI) has biased composition (basic and acidic residues). The segment covering 84–93 (PANPVKAAKP) has biased composition (low complexity).

It belongs to the YihI family. Interacts with Der.

Functionally, a GTPase-activating protein (GAP) that modifies Der/EngA GTPase function. May play a role in ribosome biogenesis. In Erwinia tasmaniensis (strain DSM 17950 / CFBP 7177 / CIP 109463 / NCPPB 4357 / Et1/99), this protein is Der GTPase-activating protein YihI.